The chain runs to 584 residues: ETHYLENE INSENSITIVE 3-like 1 protein (584 aa).

Positions 41–74 (YTDDEMDVDELEKRMWRDKMRLKRLKEQQSKCKE) form a coiled coil. The segment covering 67–80 (EQQSKCKEGVDGSK) has biased composition (basic and acidic residues). Disordered regions lie at residues 67 to 93 (EQQS…RKKM) and 565 to 584 (EGMG…SIWF).

This sequence belongs to the EIN3 family. Acts as a homodimer to bind the primary ethylene response element.

It is found in the nucleus. Probable transcription factor acting as a positive regulator in the ethylene response pathway. Could bind the primary ethylene response element present in the ETHYLENE-RESPONSE-FACTOR1 promoter. The polypeptide is ETHYLENE INSENSITIVE 3-like 1 protein (EIL1) (Arabidopsis thaliana (Mouse-ear cress)).